The sequence spans 135 residues: UPF0299 membrane protein PC1_1498 (135 aa).

A run of 4 helical transmembrane segments spans residues 5-25 (FIVCWQYLRAFALIYLCLLAG), 30-50 (ALLPFTIPGSIIGMLVLFTLL), 63-83 (GCHLLIRHMALLFVPIGVGVM), and 93-113 (FGPIVVSCLISTFIVMLVVGF).

It belongs to the UPF0299 family.

Its subcellular location is the cell inner membrane. The polypeptide is UPF0299 membrane protein PC1_1498 (Pectobacterium carotovorum subsp. carotovorum (strain PC1)).